A 705-amino-acid chain; its full sequence is Elongation factor G (705 aa).

One can recognise a tr-type G domain in the interval 8–294 (DRYRNFGIMA…AVIDYLPSPL (287 aa)). GTP-binding positions include 17 to 24 (AHIDAGKT), 92 to 96 (DTPGH), and 146 to 149 (NKMD).

The protein belongs to the TRAFAC class translation factor GTPase superfamily. Classic translation factor GTPase family. EF-G/EF-2 subfamily.

Its subcellular location is the cytoplasm. Its function is as follows. Catalyzes the GTP-dependent ribosomal translocation step during translation elongation. During this step, the ribosome changes from the pre-translocational (PRE) to the post-translocational (POST) state as the newly formed A-site-bound peptidyl-tRNA and P-site-bound deacylated tRNA move to the P and E sites, respectively. Catalyzes the coordinated movement of the two tRNA molecules, the mRNA and conformational changes in the ribosome. This chain is Elongation factor G, found in Dinoroseobacter shibae (strain DSM 16493 / NCIMB 14021 / DFL 12).